Reading from the N-terminus, the 113-residue chain is Large ribosomal subunit protein bL17 (113 aa).

The protein belongs to the bacterial ribosomal protein bL17 family. As to quaternary structure, part of the 50S ribosomal subunit. Contacts protein L32.

In Clostridium novyi (strain NT), this protein is Large ribosomal subunit protein bL17.